Reading from the N-terminus, the 138-residue chain is Acidic phospholipase A2 AplTX-I (138 aa).

The signal sequence occupies residues 1–16 (MRTLWIMAVLLLGVEG). Cystine bridges form between cysteine 42–cysteine 131, cysteine 44–cysteine 60, cysteine 59–cysteine 111, cysteine 65–cysteine 138, cysteine 66–cysteine 104, cysteine 73–cysteine 97, and cysteine 91–cysteine 102. Residues tyrosine 43, glycine 45, and glycine 47 each coordinate Ca(2+). Histidine 63 is a catalytic residue. Aspartate 64 is a binding site for Ca(2+). Residue aspartate 105 is part of the active site.

Monomer. Ca(2+) is required as a cofactor. As to expression, expressed by the venom gland.

Its subcellular location is the secreted. It carries out the reaction a 1,2-diacyl-sn-glycero-3-phosphocholine + H2O = a 1-acyl-sn-glycero-3-phosphocholine + a fatty acid + H(+). Its activity is regulated as follows. Inhibited by divalent cations different from calcium ions (cadmium, magnesium, manganese, zinc), since they act as competitive antagonists of this cofactor. In terms of biological role, snake venom phospholipase A2 (PLA2) that triggers a high neuromuscular toxicity in chick biventer cervicis preparations, but not in mouse phrenic nerve-diaphragm (PND) preparations, suggesting a selective neurotoxin activity towards birds. Does not induce myotoxic, coagulant, anticoagulant, edema, and antibacterial activities. PLA2 catalyzes the calcium-dependent hydrolysis of the 2-acyl groups in 3-sn-phosphoglycerides. The protein is Acidic phospholipase A2 AplTX-I of Agkistrodon piscivorus leucostoma (Western cottonmouth).